A 72-amino-acid polypeptide reads, in one-letter code: N-alpha-acetyltransferase 38, NatC auxiliary subunit (72 aa).

The Sm domain occupies 3–72 (NGEILLTSWL…KHIKSFSVRA (70 aa)).

Component of the N-terminal acetyltransferase C (NatC) complex, composed of the catalytic subunit Naa30, a large auxiliary subunit Naa35 and a small auxiliary subunit Naa38.

The protein resides in the endoplasmic reticulum. Functionally, component of the NatC N-terminal acetyltransferase, which associates with the ribosome to acetylate nascent protein chains in a cotranslational manner. NatC acetylates protein N-termini starting with methionine, followed by a hydrophobic or amphipathic amino acid, with amino acids at positions 3 and 4 also contributing to NatC recognition. The first 4 amino acids of cognate substrates are recognized at the Naa30-Naa35 interface. NatC-dependent acetylation targets various substrate proteins to specific subcellular sites. In Schizosaccharomyces pombe (strain 972 / ATCC 24843) (Fission yeast), this protein is N-alpha-acetyltransferase 38, NatC auxiliary subunit (naa38).